A 331-amino-acid chain; its full sequence is 6-phosphogluconolactonase (331 aa).

Belongs to the cycloisomerase 2 family.

It carries out the reaction 6-phospho-D-glucono-1,5-lactone + H2O = 6-phospho-D-gluconate + H(+). The protein operates within carbohydrate degradation; pentose phosphate pathway; D-ribulose 5-phosphate from D-glucose 6-phosphate (oxidative stage): step 2/3. Functionally, catalyzes the hydrolysis of 6-phosphogluconolactone to 6-phosphogluconate. The sequence is that of 6-phosphogluconolactonase from Citrobacter koseri (strain ATCC BAA-895 / CDC 4225-83 / SGSC4696).